The following is a 128-amino-acid chain: Fluoride-specific ion channel FluC (128 aa).

The next 4 membrane-spanning stretches (helical) occupy residues 7–29, 36–57, 65–94, and 98–126; these read LNFIAIGIGATLGAWLRWVLGLR, PWGTLTANLVGGYLIGVMVALI, AWIRLAAVTGFLGGLTTFSTFSAETVDMLE, and YATAAAYAGASLAGSLAMTGLGLATVRLL. Position 43 (N43) interacts with fluoride. Na(+) contacts are provided by G77 and T80. Fluoride is bound by residues Y104, S108, and S112.

It belongs to the fluoride channel Fluc/FEX (TC 1.A.43) family. In terms of assembly, homodimer.

It localises to the cell inner membrane. It carries out the reaction fluoride(in) = fluoride(out). With respect to regulation, na(+) is not transported, but it plays an essential structural role and its presence is essential for fluoride channel function. The Na(+)-binding site is specific for Na(+) over most other cations including K(+) and Mg(2+). Fluoride efflux is inhibited by Li(2+). In terms of biological role, fluoride-specific ion channel. Important for reducing fluoride concentration in the cell, thus reducing its toxicity. Is highly specific for fluoride ions and cannot transport chloride ions. The protein is Fluoride-specific ion channel FluC of Bordetella pertussis (strain Tohama I / ATCC BAA-589 / NCTC 13251).